A 377-amino-acid chain; its full sequence is Homoserine O-succinyltransferase (377 aa).

In terms of domain architecture, AB hydrolase-1 spans 50-358; that stretch reads NAVLICHALS…PSSYGHDSFL (309 aa). The active-site Nucleophile is serine 156. Arginine 226 is a substrate binding site. Active-site residues include aspartate 321 and histidine 354. Aspartate 355 contacts substrate.

It belongs to the AB hydrolase superfamily. MetX family. As to quaternary structure, homodimer.

It is found in the cytoplasm. It carries out the reaction L-homoserine + succinyl-CoA = O-succinyl-L-homoserine + CoA. The protein operates within amino-acid biosynthesis; L-methionine biosynthesis via de novo pathway; O-succinyl-L-homoserine from L-homoserine: step 1/1. In terms of biological role, transfers a succinyl group from succinyl-CoA to L-homoserine, forming succinyl-L-homoserine. This Nitrosomonas europaea (strain ATCC 19718 / CIP 103999 / KCTC 2705 / NBRC 14298) protein is Homoserine O-succinyltransferase.